The chain runs to 268 residues: Centromere protein Q (268 aa).

The segment at 1-80 (MSGKANASKK…KTWQPLSKST (80 aa)) is disordered. Residues Ser-31 and Ser-50 each carry the phosphoserine modification. Residues 58-72 (TNLKHGKTAASKRKT) are compositionally biased toward basic residues. Positions 170-206 (ELMTGNIQSLKNKIQILASEVEEEEERVKQMHQINSS) form a coiled coil. Ser-249 is subject to Phosphoserine.

Belongs to the CENP-Q/OKP1 family. In terms of assembly, component of the CENPA-CAD complex, composed of CENPI, CENPK, CENPL, CENPO, CENPP, CENPQ, CENPR and CENPS. The CENPA-CAD complex interacts with the CENPA-NAC complex, at least composed of CENPA, CENPC, CENPH, CENPM, CENPN, CENPT and CENPU. Post-translationally, phosphorylation at Ser-50 is essential for CENPE recruitment to kinetochores and orderly chromosome congression.

Its subcellular location is the nucleus. It is found in the chromosome. The protein localises to the centromere. In terms of biological role, component of the CENPA-CAD (nucleosome distal) complex, a complex recruited to centromeres which is involved in assembly of kinetochore proteins, mitotic progression and chromosome segregation. May be involved in incorporation of newly synthesized CENPA into centromeres via its interaction with the CENPA-NAC complex. Plays an important role in chromosome congression and in the recruitment of CENP-O complex (which comprises CENPO, CENPP, CENPQ and CENPU), CENPE and PLK1 to the kinetochores. The protein is Centromere protein Q (CENPQ) of Homo sapiens (Human).